Here is a 305-residue protein sequence, read N- to C-terminus: Phosphoinositol dihydroceramide synthase (305 aa).

A signal peptide spans 1-23 (MPSKKETLTVIVIMALFLLLTAA). Cysteine 24 carries the N-palmitoyl cysteine lipid modification. Cysteine 24 is lipidated: S-diacylglycerol cysteine. 6 consecutive transmembrane segments (helical) span residues 41–61 (LFFAGLPTRKLAVALLPFAIF), 117–137 (VFAGIFYLCWVPVPILFGLCL), 149–169 (FALVFLFVNLIGFAGYYIHPA), 216–236 (FAAVPSLHAAYMVVALVYAII), 241–261 (WYVIALFSVIMAGIWGTAIYS), and 266–286 (IIDVLLGISCALLGWLFFEYG).

It is found in the membrane. It catalyses the reaction N-(2-hydroxy-fatty acyl)-dihydroceramide + a 1,2-diacyl-sn-glycero-3-phospho-(1D-myo-inositol) = inositol-1-phospho-N-(2-hydroxy-fatty acyl)-dihydroceramide + a 1,2-diacyl-sn-glycerol. Catalyzes the addition of a phosphorylinositol group onto dihydroceramide to form phosphoinositol dihydroceramide (PI-DHC), an essential step in sphingolipid biosynthesis. In Bacteroides thetaiotaomicron (strain ATCC 29148 / DSM 2079 / JCM 5827 / CCUG 10774 / NCTC 10582 / VPI-5482 / E50), this protein is Phosphoinositol dihydroceramide synthase.